The sequence spans 63 residues: Large ribosomal subunit protein bL28 (63 aa).

It belongs to the bacterial ribosomal protein bL28 family.

In Solibacter usitatus (strain Ellin6076), this protein is Large ribosomal subunit protein bL28.